A 1846-amino-acid polypeptide reads, in one-letter code: Brefeldin A-inhibited guanine nucleotide-exchange protein 1 (1846 aa).

Residues 2–224 (YEGKKTKNMF…QEAKQMERER (223 aa)) form a DCB; DCB:DCB domain and DCB:HUS domain interaction region. Ser-52 is modified (phosphoserine). 3 disordered regions span residues 217–248 (AKQM…HLRY), 264–302 (DLDP…DQAT), and 347–410 (VSAS…SPGA). Residues 267 to 277 (PQTHDVDKSLQ) are compositionally biased toward basic and acidic residues. 5 positions are modified to phosphoserine: Ser-286, Ser-289, Ser-290, Ser-394, and Ser-407. Residues 391 to 406 (SVSSNDTQESGNSSGP) show a composition bias toward polar residues. Positions 554–574 (ADAQSVVDIYVNYDCDLNAAN) are HUS; DCB:HUS domain interaction. Positions 631–684 (PNSQTTLGQEKPSEQEISEIKHPETINRYGSLNSLESTSSSGIGSYSTQMSGTD) are disordered. The segment covering 641 to 655 (KPSEQEISEIKHPET) has biased composition (basic and acidic residues). Positions 661-681 (SLNSLESTSSSGIGSYSTQMS) are enriched in low complexity. An SEC7 domain is found at 688–877 (QFEVLKQQKE…SAIYNEIAGK (190 aa)). The Nuclear localization signal (NLS) signature appears at 708–712 (KKPKR). Phosphoserine occurs at positions 1076, 1563, and 1566. Residues 1571-1600 (DSAQPRSSDNRQQAPLVSVSPASEEVSKGR) form a disordered region. Residues 1574-1585 (QPRSSDNRQQAP) show a composition bias toward polar residues.

As to quaternary structure, homodimer. Interacts with ARFGEF2/BIG2; both proteins are probably part of the same or very similar macromolecular complexes. Interacts with FKBP2. Interacts with MYO9B. Interacts with PRKAR1A and PRKAR2A. Interacts with PPP1CC. Interacts with NCL, FBL, NUP62 and U3 small nucleolar RNA. Interacts with DPY30. Interacts with PDE3A. Interacts with KANK1. Interacts with TBC1D22A and TBC1D22B. Phosphorylated. In vitro phosphorylated by PKA reducing its GEF activity and dephosphorylated by phosphatase PP1.

It localises to the cytoplasm. The protein localises to the perinuclear region. It is found in the golgi apparatus. Its subcellular location is the trans-Golgi network. The protein resides in the nucleus. It localises to the nucleolus. The protein localises to the nucleus matrix. It is found in the membrane. Its activity is regulated as follows. Inhibited by brefeldin A. In terms of biological role, promotes guanine-nucleotide exchange on ARF1 and ARF3. Promotes the activation of ARF1/ARF3 through replacement of GDP with GTP. Involved in vesicular trafficking. Required for the maintenance of Golgi structure; the function may be independent of its GEF activity. Required for the maturation of integrin beta-1 in the Golgi. Involved in the establishment and persistence of cell polarity during directed cell movement in wound healing. Proposed to act as A kinase-anchoring protein (AKAP) and may mediate crosstalk between Arf and PKA pathways. Inhibits GAP activity of MYO9B probably through competitive RhoA binding. The function in the nucleus remains to be determined. This is Brefeldin A-inhibited guanine nucleotide-exchange protein 1 (Arfgef1) from Rattus norvegicus (Rat).